A 334-amino-acid polypeptide reads, in one-letter code: Holliday junction branch migration complex subunit RuvB (334 aa).

The segment at Ala4 to Tyr184 is large ATPase domain (RuvB-L). ATP contacts are provided by residues Arg24, Gly65, Lys68, Thr69, Thr70, Glu131–Tyr133, Arg174, Tyr184, and Arg221. Thr69 contributes to the Mg(2+) binding site. The tract at residues Asn185 to Asp255 is small ATPAse domain (RuvB-S). The interval Gly258–Glu334 is head domain (RuvB-H). Residues Arg294, Arg313, and Arg318 each coordinate DNA.

The protein belongs to the RuvB family. Homohexamer. Forms an RuvA(8)-RuvB(12)-Holliday junction (HJ) complex. HJ DNA is sandwiched between 2 RuvA tetramers; dsDNA enters through RuvA and exits via RuvB. An RuvB hexamer assembles on each DNA strand where it exits the tetramer. Each RuvB hexamer is contacted by two RuvA subunits (via domain III) on 2 adjacent RuvB subunits; this complex drives branch migration. In the full resolvosome a probable DNA-RuvA(4)-RuvB(12)-RuvC(2) complex forms which resolves the HJ.

It is found in the cytoplasm. It carries out the reaction ATP + H2O = ADP + phosphate + H(+). Its function is as follows. The RuvA-RuvB-RuvC complex processes Holliday junction (HJ) DNA during genetic recombination and DNA repair, while the RuvA-RuvB complex plays an important role in the rescue of blocked DNA replication forks via replication fork reversal (RFR). RuvA specifically binds to HJ cruciform DNA, conferring on it an open structure. The RuvB hexamer acts as an ATP-dependent pump, pulling dsDNA into and through the RuvAB complex. RuvB forms 2 homohexamers on either side of HJ DNA bound by 1 or 2 RuvA tetramers; 4 subunits per hexamer contact DNA at a time. Coordinated motions by a converter formed by DNA-disengaged RuvB subunits stimulates ATP hydrolysis and nucleotide exchange. Immobilization of the converter enables RuvB to convert the ATP-contained energy into a lever motion, pulling 2 nucleotides of DNA out of the RuvA tetramer per ATP hydrolyzed, thus driving DNA branch migration. The RuvB motors rotate together with the DNA substrate, which together with the progressing nucleotide cycle form the mechanistic basis for DNA recombination by continuous HJ branch migration. Branch migration allows RuvC to scan DNA until it finds its consensus sequence, where it cleaves and resolves cruciform DNA. This chain is Holliday junction branch migration complex subunit RuvB, found in Shewanella sp. (strain MR-4).